A 347-amino-acid chain; its full sequence is GMP reductase (347 aa).

108-131 serves as a coordination point for NADP(+); the sequence is ADFEKTVQILALNPALNFVCIDVA. Residues glycine 181 and glycine 183 each coordinate K(+). The active-site Thioimidate intermediate is the cysteine 186. Residue 216-239 participates in NADP(+) binding; sequence IVSDGGCTMPGDVAKAFGGGADFV.

The protein belongs to the IMPDH/GMPR family. GuaC type 1 subfamily. As to quaternary structure, homotetramer.

It catalyses the reaction IMP + NH4(+) + NADP(+) = GMP + NADPH + 2 H(+). Functionally, catalyzes the irreversible NADPH-dependent deamination of GMP to IMP. It functions in the conversion of nucleobase, nucleoside and nucleotide derivatives of G to A nucleotides, and in maintaining the intracellular balance of A and G nucleotides. The polypeptide is GMP reductase (Salmonella choleraesuis (strain SC-B67)).